The sequence spans 472 residues: 2-oxoisovalerate dehydrogenase subunit alpha 1, mitochondrial (472 aa).

A mitochondrion-targeting transit peptide spans 1-56 (MAIWFARSKTLVSSLRHNLNLSTILIKRDYSHRPIFYTTSQLSSTAYLSPFGSLRH). Residue 185–187 (QYR) coordinates thiamine diphosphate. K(+) is bound by residues S234, T239, and Q240.

The protein belongs to the BCKDHA family. Heterotetramer of alpha and beta chains. Thiamine diphosphate is required as a cofactor.

The protein localises to the mitochondrion matrix. The enzyme catalyses N(6)-[(R)-lipoyl]-L-lysyl-[protein] + 3-methyl-2-oxobutanoate + H(+) = N(6)-[(R)-S(8)-2-methylpropanoyldihydrolipoyl]-L-lysyl-[protein] + CO2. Its function is as follows. The branched-chain alpha-keto dehydrogenase complex catalyzes the overall conversion of alpha-keto acids to acyl-CoA and CO(2). It contains multiple copies of three enzymatic components: branched-chain alpha-keto acid decarboxylase (E1), lipoamide acyltransferase (E2) and lipoamide dehydrogenase (E3). Required during sugar starvation. In Arabidopsis thaliana (Mouse-ear cress), this protein is 2-oxoisovalerate dehydrogenase subunit alpha 1, mitochondrial.